Consider the following 201-residue polypeptide: uncharacterized protein (201 aa).

A signal peptide spans 1-23 (MKILYFIFVIIINILLILNHVKS). Residues 24 to 178 (KYNTFIFENT…GNYGEDPQRN (155 aa)) lie on the Extracellular side of the membrane. N-linked (GlcNAc...) asparagine glycans are attached at residues Asn114 and Asn134. The tract at residues 122–157 (TPETPSPTENAPNTSGGSSEGNHYTYKSSSSSSEHI) is disordered. Over residues 123-148 (PETPSPTENAPNTSGGSSEGNHYTYK) the composition is skewed to polar residues. Residues 179–199 (IGISLSSSLIFISILFLIIFI) traverse the membrane as a helical segment. Residues 200-201 (NN) lie on the Cytoplasmic side of the membrane.

The protein localises to the membrane. This is an uncharacterized protein from Dictyostelium discoideum (Social amoeba).